Consider the following 503-residue polypeptide: DnaJ homolog subfamily C member 3 (503 aa).

Residues 1 to 31 (MVSAAASAGRLGSALPFLLVLLDLQYQGAEC) form the signal peptide. 9 TPR repeats span residues 37–70 (VEKQ…DSDN), 71–104 (YIAY…KQDF), 105–137 (TSRL…NPSN), 153–186 (LQRL…CVWD), 187–220 (AELR…KSDN), 221–254 (TEAF…DQDH), 267–300 (LNKQ…EPDV), 305–338 (TRAK…EPTN), and 339–372 (VNAL…SEND). C247 and C257 are disulfide-bonded. A disulfide bond links C312 and C328. Residues 374–392 (QIREGLERAQRMLKQSQKR) are flexible linker. Residues 393–461 (DYYKILGVKR…EMRRKFDAGE (69 aa)) enclose the J domain.

It localises to the endoplasmic reticulum. May be involved in the unfolded protein response (UPR) during ER stress. The protein is DnaJ homolog subfamily C member 3 (DNAJC3) of Gallus gallus (Chicken).